The primary structure comprises 483 residues: Membrane-bound lytic murein transglycosylase F (483 aa).

A signal peptide spans 1 to 18 (MKGLIARFIAGFALLLWA). The interval 19–267 (WDMVFPWQQL…RIEEKYFNHL (249 aa)) is non-LT domain. Positions 269 to 483 (HFDYVDIQSY…SKESDSTLKE (215 aa)) are LT domain. Glutamate 312 is a catalytic residue. The interval 458-483 (QQIQNNEEQPSVPQEISKESDSTLKE) is disordered. Basic and acidic residues predominate over residues 473–483 (ISKESDSTLKE).

The protein in the N-terminal section; belongs to the bacterial solute-binding protein 3 family. This sequence in the C-terminal section; belongs to the transglycosylase Slt family.

The protein resides in the cell outer membrane. The catalysed reaction is Exolytic cleavage of the (1-&gt;4)-beta-glycosidic linkage between N-acetylmuramic acid (MurNAc) and N-acetylglucosamine (GlcNAc) residues in peptidoglycan, from either the reducing or the non-reducing ends of the peptidoglycan chains, with concomitant formation of a 1,6-anhydrobond in the MurNAc residue.. Its function is as follows. Murein-degrading enzyme that degrades murein glycan strands and insoluble, high-molecular weight murein sacculi, with the concomitant formation of a 1,6-anhydromuramoyl product. Lytic transglycosylases (LTs) play an integral role in the metabolism of the peptidoglycan (PG) sacculus. Their lytic action creates space within the PG sacculus to allow for its expansion as well as for the insertion of various structures such as secretion systems and flagella. This Actinobacillus pleuropneumoniae serotype 5b (strain L20) protein is Membrane-bound lytic murein transglycosylase F.